Reading from the N-terminus, the 158-residue chain is NAD(P)H-quinone oxidoreductase subunit N (158 aa).

The protein belongs to the complex I NdhN subunit family. In terms of assembly, NDH-1 can be composed of about 15 different subunits; different subcomplexes with different compositions have been identified which probably have different functions.

The protein localises to the cellular thylakoid membrane. It carries out the reaction a plastoquinone + NADH + (n+1) H(+)(in) = a plastoquinol + NAD(+) + n H(+)(out). It catalyses the reaction a plastoquinone + NADPH + (n+1) H(+)(in) = a plastoquinol + NADP(+) + n H(+)(out). NDH-1 shuttles electrons from an unknown electron donor, via FMN and iron-sulfur (Fe-S) centers, to quinones in the respiratory and/or the photosynthetic chain. The immediate electron acceptor for the enzyme in this species is believed to be plastoquinone. Couples the redox reaction to proton translocation, and thus conserves the redox energy in a proton gradient. Cyanobacterial NDH-1 also plays a role in inorganic carbon-concentration. This Microcystis aeruginosa (strain NIES-843 / IAM M-2473) protein is NAD(P)H-quinone oxidoreductase subunit N.